Here is a 542-residue protein sequence, read N- to C-terminus: Chaperonin GroEL 1 (542 aa).

ATP is bound by residues 29-32, 86-90, glycine 413, 477-479, and aspartate 493; these read TLGP, DGTTT, and NAA.

The protein belongs to the chaperonin (HSP60) family. In terms of assembly, forms a cylinder of 14 subunits composed of two heptameric rings stacked back-to-back. Interacts with the co-chaperonin GroES.

It localises to the cytoplasm. It carries out the reaction ATP + H2O + a folded polypeptide = ADP + phosphate + an unfolded polypeptide.. Its function is as follows. Together with its co-chaperonin GroES, plays an essential role in assisting protein folding. The GroEL-GroES system forms a nano-cage that allows encapsulation of the non-native substrate proteins and provides a physical environment optimized to promote and accelerate protein folding. The chain is Chaperonin GroEL 1 from Renibacterium salmoninarum (strain ATCC 33209 / DSM 20767 / JCM 11484 / NBRC 15589 / NCIMB 2235).